The sequence spans 580 residues: Arginine--tRNA ligase (580 aa).

The 'HIGH' region motif lies at 131–141; that stretch reads ANPTGPLHVGH.

It belongs to the class-I aminoacyl-tRNA synthetase family. In terms of assembly, monomer.

It localises to the cytoplasm. The catalysed reaction is tRNA(Arg) + L-arginine + ATP = L-arginyl-tRNA(Arg) + AMP + diphosphate. In Ruegeria sp. (strain TM1040) (Silicibacter sp.), this protein is Arginine--tRNA ligase.